The following is a 224-amino-acid chain: Phosphoribosylformylglycinamidine synthase subunit PurQ (224 aa).

The region spanning 2–224 is the Glutamine amidotransferase type-1 domain; it reads TVAVVRFGGS…DGQGILGAFA (223 aa). The active-site Nucleophile is the Cys-85. Residues His-202 and Glu-204 contribute to the active site.

In terms of assembly, part of the FGAM synthase complex composed of 1 PurL, 1 PurQ and 2 PurS subunits.

It localises to the cytoplasm. The enzyme catalyses N(2)-formyl-N(1)-(5-phospho-beta-D-ribosyl)glycinamide + L-glutamine + ATP + H2O = 2-formamido-N(1)-(5-O-phospho-beta-D-ribosyl)acetamidine + L-glutamate + ADP + phosphate + H(+). The catalysed reaction is L-glutamine + H2O = L-glutamate + NH4(+). The protein operates within purine metabolism; IMP biosynthesis via de novo pathway; 5-amino-1-(5-phospho-D-ribosyl)imidazole from N(2)-formyl-N(1)-(5-phospho-D-ribosyl)glycinamide: step 1/2. Part of the phosphoribosylformylglycinamidine synthase complex involved in the purines biosynthetic pathway. Catalyzes the ATP-dependent conversion of formylglycinamide ribonucleotide (FGAR) and glutamine to yield formylglycinamidine ribonucleotide (FGAM) and glutamate. The FGAM synthase complex is composed of three subunits. PurQ produces an ammonia molecule by converting glutamine to glutamate. PurL transfers the ammonia molecule to FGAR to form FGAM in an ATP-dependent manner. PurS interacts with PurQ and PurL and is thought to assist in the transfer of the ammonia molecule from PurQ to PurL. This chain is Phosphoribosylformylglycinamidine synthase subunit PurQ, found in Halobacterium salinarum (strain ATCC 700922 / JCM 11081 / NRC-1) (Halobacterium halobium).